The primary structure comprises 513 residues: Histidine--tRNA ligase (513 aa).

A mitochondrion-targeting transit peptide spans 1–24 (MADKAQLQEAIKTQGEVVRKLKSE). The WHEP-TRS domain occupies 3–59 (DKAQLQEAIKTQGEVVRKLKSEKASKEQIDEEVARLLQLKAQLGGDEGKHVFVLKTA). L-histidine-binding positions include 130–132 (DLT), Arg-157, Gln-173, Asp-177, Arg-326, and 330–331 (YY).

This sequence belongs to the class-II aminoacyl-tRNA synthetase family.

The protein resides in the cytoplasm. The protein localises to the mitochondrion. The catalysed reaction is tRNA(His) + L-histidine + ATP = L-histidyl-tRNA(His) + AMP + diphosphate + H(+). Its function is as follows. Catalyzes the aminoacylation of histidyl-tRNA. The protein is Histidine--tRNA ligase of Danio rerio (Zebrafish).